The primary structure comprises 357 residues: Aminomethyltransferase (357 aa).

The protein belongs to the GcvT family. As to quaternary structure, the glycine cleavage system is composed of four proteins: P, T, L and H.

It carries out the reaction N(6)-[(R)-S(8)-aminomethyldihydrolipoyl]-L-lysyl-[protein] + (6S)-5,6,7,8-tetrahydrofolate = N(6)-[(R)-dihydrolipoyl]-L-lysyl-[protein] + (6R)-5,10-methylene-5,6,7,8-tetrahydrofolate + NH4(+). The glycine cleavage system catalyzes the degradation of glycine. The polypeptide is Aminomethyltransferase (Halothermothrix orenii (strain H 168 / OCM 544 / DSM 9562)).